A 628-amino-acid chain; its full sequence is EF-hand calcium-binding domain-containing protein 7 (628 aa).

The span at 1–22 (MASNPGSDAALGTQNPLLSGSP) shows a compositional bias: polar residues. The interval 1–24 (MASNPGSDAALGTQNPLLSGSPRT) is disordered. EF-hand domains lie at 102–137 (TSKA…RGEK) and 138–173 (MTQE…TSEQ). The segment at 192 to 231 (QFGSHMEGSPERGPSPAPKPSPRVIRKNDQETFSSKGDTS) is disordered. A phosphoserine mark is found at Ser-200 and Ser-212. The span at 222-231 (ETFSSKGDTS) shows a compositional bias: polar residues. The EF-hand 3 domain occupies 402–437 (EFRSTLSEIFEVIDLDGNGLISLEEYNFFELRTSGE). Asp-415, Asp-417, Asn-419, and Glu-426 together coordinate Ca(2+).

Component of the EvC complex composed of EFCAB7, IQCE, EVC2 and EVC; built from two subcomplexes, EVC2:EVC and EFCAB7:IQCE. Interacts (via EF-hand 1 and 2) with IQCE (via N-terminus); this interaction anchors the EVC-EVC2 complex in a signaling microdomain at the base of cilia and stimulates the Hedgehog (Hh) pathway. Interacts with EVC2 (via N-terminal end). Interacts with EVC.

The protein localises to the cell projection. The protein resides in the cilium membrane. Its function is as follows. Component of the EvC complex that positively regulates ciliary Hedgehog (Hh) signaling. Required for the localization of the EVC2:EVC subcomplex at the base of primary cilia. The protein is EF-hand calcium-binding domain-containing protein 7 (Efcab7) of Mus musculus (Mouse).